Here is a 374-residue protein sequence, read N- to C-terminus: MEALIASTSFFVPISNSSSSHIINNRFFPSFYSPNLNFGTFRKTSLSSSHLVFSSSAISAPPSSTVLTRNSYWMVLLDKPPHWVSSKSAMVDYYVEILAKVLGNEKDAQVSIYDASFDTHFGFCCHIDEDASRQLASLPGVVSIRPEQDYSSEKKNYGIGSHKGVSLFDHGTVKHWMVRIDKPGVGIVTKAQMVDHCVQLLSKVLWNEKDAQMCLYHVSWQSDFGFCCDLDERSAVELAGVPGVLAVVPDNSFESLNKDYEGDSTQDSRDQDDSESPPVKTKKLFITGLSFYTSEKTLRAAFEGFGELVEVKIIMDKISKRSKGYAFLEYTTEEAAGTALKEMNGKIINGWMIVVDVAKTKPFRQNRSQPSFGL.

A chloroplast-targeting transit peptide spans methionine 1–serine 54. The segment covering lysine 258 to glutamine 271 has biased composition (basic and acidic residues). Residues lysine 258–valine 279 form a disordered region. In terms of domain architecture, RRM spans lysine 282–threonine 360.

Interacts with PCMP-H51/CRR28 and PCMP-H12/OTP82. Interacts with MORF8/RIP1, MORF2/RIP2 and VAR3/OZ1.

It is found in the plastid. Its subcellular location is the chloroplast. Its function is as follows. Involved in C-to-U editing of chloroplastic RNA. Functions as major chloroplastic editing factor. Controls 62 percent of the chloroplastic editing sites. Binds RNA close to ORRM1-dependent editing sites in vitro. Binds the editing recognition trans-factors PCMP-H51/CRR28 and PCMP-H12/OTP82. This Arabidopsis thaliana (Mouse-ear cress) protein is Organelle RRM domain-containing protein 1, chloroplastic.